Consider the following 439-residue polypeptide: C4-dicarboxylate transport protein (439 aa).

The next 9 helical transmembrane spans lie at 9–29, 45–65, 80–100, 150–170, 186–206, 221–241, 291–311, 334–354, and 357–377; these read HLYF…YYLP, MIKM…IAGM, LYFE…INII, GEIL…SAMG, AFFG…FGAM, LGML…VVLG, VVGL…SIYL, ILGV…SGFV, and AATF…ILGI.

The protein belongs to the dicarboxylate/amino acid:cation symporter (DAACS) (TC 2.A.23) family.

The protein localises to the cell inner membrane. Responsible for the transport of dicarboxylates such as succinate, fumarate, and malate from the periplasm across the membrane. This is C4-dicarboxylate transport protein from Geobacter sp. (strain M21).